The following is a 352-amino-acid chain: S-norcoclaurine synthase 1 (352 aa).

The Fe2OG dioxygenase domain occupies 200 to 304; the sequence is KPLRTVFNRE…RLSIAAFHDP (105 aa). Fe cation contacts are provided by H228, D230, and H285.

The protein belongs to the iron/ascorbate-dependent oxidoreductase family. Monomer. Fe cation is required as a cofactor.

It carries out the reaction (4-hydroxyphenyl)acetaldehyde + dopamine = (S)-norcoclaurine + H2O. With respect to regulation, inhibited by O-phenanthroline, but not by EDTA. Its function is as follows. Involved in the biosynthesis of the common precursor of all benzylisoquinoline alkaloids such as morphine, sanguinarine, codeine or berberine. Condenses dopamine and phenylacetaldehyde, 3,4-dihydrophenylacetaldehyde or 4-hydroxyphenylacetaldehyde. This is S-norcoclaurine synthase 1 (NCS1) from Coptis japonica (Japanese goldthread).